Consider the following 181-residue polypeptide: Large ribosomal subunit protein uL6 (181 aa).

It belongs to the universal ribosomal protein uL6 family. As to quaternary structure, part of the 50S ribosomal subunit.

In terms of biological role, this protein binds to the 23S rRNA, and is important in its secondary structure. It is located near the subunit interface in the base of the L7/L12 stalk, and near the tRNA binding site of the peptidyltransferase center. This is Large ribosomal subunit protein uL6 from Desulforudis audaxviator (strain MP104C).